The chain runs to 504 residues: Transcription factor NDT80 (504 aa).

3 disordered regions span residues 64–172 (MHFN…QHHM), 283–310 (NGFP…NQHA), and 477–504 (RGRS…TPPQ). Low complexity-rich tracts occupy residues 73–87 (QQQQ…QQQQ), 103–145 (QGPT…ARQP), 153–172 (QQAQ…QHHM), and 292–301 (HPQNQPQNHP). A DNA-binding region (NDT80) is located at residues 160 to 488 (QADAQSQAQQ…RSPSSYHKDR (329 aa)).

It localises to the nucleus. Functionally, meiosis-specific transcription factor that binds to the middle sporulation element (MSE) of targeted genes corresponding to the consensus sequence 5'-ACACAAA-3'. Acts as an activator of CDR1 induction by antifungal drugs. Modulates azole sensitivity by controlling the expression of ergosterol biosynthesis genes. Required for hyphal growth in response to different filament-inducing cues and for the proper expression of genes characterizing the filamentous transcriptional program including noteworthy genes encoding cell wall components, such as HWP1, ECE1, RBT4, and ALS3. Is essential for the completion of cell separation through the direct transcriptional regulation of genes encoding the chitinase CHT3 and the cell wall glucosidase SUN41. Required for biofilm formation and plays a key role in microcolony formation under both flow and static conditions and to epithelial surfaces. Essential for virulence. The chain is Transcription factor NDT80 from Candida albicans (strain SC5314 / ATCC MYA-2876) (Yeast).